Consider the following 382-residue polypeptide: Protein-arginine rhamnosyltransferase (382 aa).

Residues 17–20 (NFGD), Y187, Q252, and 268–272 (RGEDS) contribute to the dTDP-beta-L-rhamnose site. Catalysis depends on D20, which acts as the Proton acceptor. E270 is a catalytic residue.

This sequence belongs to the glycosyltransferase 104 family.

It carries out the reaction dTDP-beta-L-rhamnose + L-arginyl-[protein] = N(omega)-(alpha-L-rhamnosyl)-L-arginyl-[protein] + dTDP + H(+). Its function is as follows. Protein-arginine rhamnosyltransferase that catalyzes the transfer of a single rhamnose to elongation factor P (EF-P) on 'Lys-32', a modification required for EF-P-dependent rescue of polyproline stalled ribosomes. This is Protein-arginine rhamnosyltransferase from Neisseria meningitidis.